The primary structure comprises 263 residues: tRNA pseudouridine synthase A (263 aa).

Asp73 acts as the Nucleophile in catalysis. Tyr131 provides a ligand contact to substrate.

Belongs to the tRNA pseudouridine synthase TruA family. As to quaternary structure, homodimer.

It carries out the reaction uridine(38/39/40) in tRNA = pseudouridine(38/39/40) in tRNA. Its function is as follows. Formation of pseudouridine at positions 38, 39 and 40 in the anticodon stem and loop of transfer RNAs. The sequence is that of tRNA pseudouridine synthase A from Mycoplasmoides gallisepticum (strain R(low / passage 15 / clone 2)) (Mycoplasma gallisepticum).